Here is a 372-residue protein sequence, read N- to C-terminus: Oxysterol-binding protein 3 (372 aa).

The span at 1–10 shows a compositional bias: basic and acidic residues; it reads MGKSDRKLTE. The segment at 1 to 25 is disordered; sequence MGKSDRKLTEENSIENGVKPGKLTE.

Belongs to the OSBP family.

In Dictyostelium discoideum (Social amoeba), this protein is Oxysterol-binding protein 3 (osbC).